Here is a 129-residue protein sequence, read N- to C-terminus: Natriuretic peptides B (129 aa).

The first 26 residues, 1 to 26 (MDPQTALSRALLLLLFLHLSLLGCRS), serve as a signal peptide directing secretion. Cys107 and Cys123 form a disulfide bridge.

Belongs to the natriuretic peptide family. In terms of processing, the precursor molecule is proteolytically cleaved, possibly by FURIN or CORIN, to produce the active peptide. May undergo further proteolytic cleavage by various proteases such as DPP4, MME and possibly FAP, to give rise to a variety of shorter peptides. May be cleaved at Pro-99 by the prolyl endopeptidase FAP (seprase) activity (in vitro). May be degraded by IDE. During IDE degradation, the resulting products initially increase the activation of NPR1 and can also stimulate NPR2 to produce cGMP before the fragments are completely degraded and inactivated by IDE (in vitro).

Its subcellular location is the secreted. Its function is as follows. Cardiac hormone that plays a key role in mediating cardio-renal homeostasis. May also function as a paracrine antifibrotic factor in the heart. Acts by specifically binding and stimulating NPR1 to produce cGMP, which in turn activates effector proteins that drive various biological responses. Involved in regulating the extracellular fluid volume and maintaining the fluid-electrolyte balance through natriuresis, diuresis, vasorelaxation, and inhibition of renin and aldosterone secretion. Binds the clearance receptor NPR3. This chain is Natriuretic peptides B (NPPB), found in Bos taurus (Bovine).